The sequence spans 354 residues: Glycerol-3-phosphate dehydrogenase [NAD(+)], glycosomal (354 aa).

Residues 15–20 (GSGAFG), F90, K118, and A150 each bind NAD(+). Substrate is bound at residue K118. The Proton acceptor role is filled by K203. 2 residues coordinate NAD(+): R267 and E293. Substrate is bound at residue 267 to 268 (RN). A Microbody targeting signal motif is present at residues 352-354 (SKM).

It belongs to the NAD-dependent glycerol-3-phosphate dehydrogenase family.

The protein localises to the glycosome. It carries out the reaction sn-glycerol 3-phosphate + NAD(+) = dihydroxyacetone phosphate + NADH + H(+). This is Glycerol-3-phosphate dehydrogenase [NAD(+)], glycosomal (GPD) from Trypanosoma brucei rhodesiense.